A 204-amino-acid chain; its full sequence is dTTP/UTP pyrophosphatase (204 aa).

The active-site Proton acceptor is Asp-68.

This sequence belongs to the Maf family. YhdE subfamily. A divalent metal cation is required as a cofactor.

It localises to the cytoplasm. The catalysed reaction is dTTP + H2O = dTMP + diphosphate + H(+). It catalyses the reaction UTP + H2O = UMP + diphosphate + H(+). In terms of biological role, nucleoside triphosphate pyrophosphatase that hydrolyzes dTTP and UTP. May have a dual role in cell division arrest and in preventing the incorporation of modified nucleotides into cellular nucleic acids. The sequence is that of dTTP/UTP pyrophosphatase from Thermotoga maritima (strain ATCC 43589 / DSM 3109 / JCM 10099 / NBRC 100826 / MSB8).